A 164-amino-acid polypeptide reads, in one-letter code: HTH-type transcriptional regulator IscR (164 aa).

The HTH rrf2-type domain maps to 2–131 (RLTSKGRYAV…NNITLAELVN (130 aa)). The segment at residues 28–51 (LADISERQGISLSYLEQLFSRLRK) is a DNA-binding region (H-T-H motif). [2Fe-2S] cluster is bound by residues Cys-92, Cys-98, and Cys-104. Residues 143–164 (NNDTRRTANGRPQETINVNLRA) are disordered. Residues 152-164 (GRPQETINVNLRA) show a composition bias toward polar residues.

It depends on [2Fe-2S] cluster as a cofactor.

Functionally, regulates the transcription of several operons and genes involved in the biogenesis of Fe-S clusters and Fe-S-containing proteins. The sequence is that of HTH-type transcriptional regulator IscR from Yersinia pseudotuberculosis serotype O:1b (strain IP 31758).